The primary structure comprises 237 residues: Sugar fermentation stimulation protein homolog (237 aa).

The protein belongs to the SfsA family.

The polypeptide is Sugar fermentation stimulation protein homolog (Actinobacillus pleuropneumoniae serotype 5b (strain L20)).